A 259-amino-acid chain; its full sequence is Expansin-B4 (259 aa).

An N-terminal signal peptide occupies residues M1 to C23. An N-linked (GlcNAc...) asparagine glycan is attached at N25. One can recognise an Expansin-like EG45 domain in the interval G51 to T161. 3 disulfides stabilise this stretch: C54/C83, C86/C156, and C91/C97. The Expansin-like CBD domain occupies Y174 to S255.

This sequence belongs to the expansin family. Expansin B subfamily.

It localises to the secreted. It is found in the cell wall. Its subcellular location is the membrane. Functionally, may cause loosening and extension of plant cell walls by disrupting non-covalent bonding between cellulose microfibrils and matrix glucans. No enzymatic activity has been found. This chain is Expansin-B4 (EXPB4), found in Arabidopsis thaliana (Mouse-ear cress).